The sequence spans 707 residues: Molybdenum cofactor sulfurase (707 aa).

An N6-(pyridoxal phosphate)lysine modification is found at Lys206. The active site involves Cys365. The MOSC domain maps to 558–705; it reads QWLENALDMT…VEAGSAVRFF (148 aa).

The protein belongs to the class-V pyridoxal-phosphate-dependent aminotransferase family. MOCOS subfamily. Pyridoxal 5'-phosphate serves as cofactor.

The enzyme catalyses Mo-molybdopterin + L-cysteine + AH2 = thio-Mo-molybdopterin + L-alanine + A + H2O. The protein operates within cofactor biosynthesis; molybdopterin biosynthesis. Its function is as follows. Sulfurates the molybdenum cofactor. Sulfation of molybdenum is essential for xanthine dehydrogenase (XDH) and aldehyde oxidase (ADO) enzymes in which molybdenum cofactor is liganded by 1 oxygen and 1 sulfur atom in active form. The sequence is that of Molybdenum cofactor sulfurase (mocs-1) from Caenorhabditis briggsae.